Here is a 639-residue protein sequence, read N- to C-terminus: Kinesin-like protein KIF22 (639 aa).

Positions 18 to 345 (RVRVAVRLRP…LNFAAKSKQI (328 aa)) constitute a Kinesin motor domain. 102–109 (GPTGAGKT) contributes to the ATP binding site. The disordered stretch occupies residues 358–400 (IAALPAMKRPREEAETAAGSRQRKKSKTDSTESSPNTSMDAAS). Polar residues predominate over residues 388–397 (TESSPNTSMD). The stretch at 439–484 (KRERMALLKKWEESQMEIERLKEKQKELEQKAIEAEARLEKSTNSD) forms a coiled coil. The Important for regulated proteolytic degradation motif lies at 549 to 552 (GREN).

It belongs to the TRAFAC class myosin-kinesin ATPase superfamily. Kinesin family. Ubiquitinated, leading to its subsequent proteasomal degradation.

It is found in the nucleus. It localises to the cytoplasm. The protein localises to the cytoskeleton. Kinesin family member that is involved in spindle formation and the movements of chromosomes during mitosis and meiosis. Binds to microtubules and to DNA. The protein is Kinesin-like protein KIF22 (kif22) of Xenopus tropicalis (Western clawed frog).